The following is a 97-amino-acid chain: Sec-independent protein translocase protein TatA (97 aa).

A helical membrane pass occupies residues 1–21 (MGFNIWSLLIILLIVALLFGT). The interval 28–97 (GGDLGGAIRG…SAEHHDRSTS (70 aa)) is disordered. Over residues 37–56 (GFKESMREGEEEEAQKRADG) the composition is skewed to basic and acidic residues. Low complexity predominate over residues 78–87 (QARESSSARQ). Basic and acidic residues predominate over residues 88–97 (SAEHHDRSTS).

It belongs to the TatA/E family. In terms of assembly, the Tat system comprises two distinct complexes: a TatABC complex, containing multiple copies of TatA, TatB and TatC subunits, and a separate TatA complex, containing only TatA subunits. Substrates initially bind to the TatABC complex, which probably triggers association of the separate TatA complex to form the active translocon.

The protein resides in the cell inner membrane. Functionally, part of the twin-arginine translocation (Tat) system that transports large folded proteins containing a characteristic twin-arginine motif in their signal peptide across membranes. TatA could form the protein-conducting channel of the Tat system. The chain is Sec-independent protein translocase protein TatA from Halorhodospira halophila (strain DSM 244 / SL1) (Ectothiorhodospira halophila (strain DSM 244 / SL1)).